Reading from the N-terminus, the 184-residue chain is MKNVTDSFVSLVNWPFAGSFGLNTDILATNPINLSVVLGVLIFFGKGVLSDLLDNRKLRILNSIRNSEELQRGAIERLEKARARLRKIEIEADQFRVNGYSEIEREKFNLINSTYKTLDQLENYKNETIHFEQQRAINQVRQRVFQQALQGALGTLNSCLNKELHLRTISANIGMFGAMKEITD.

A helical transmembrane segment spans residues 27–49 (LATNPINLSVVLGVLIFFGKGVL).

Belongs to the ATPase B chain family. F-type ATPases have 2 components, F(1) - the catalytic core - and F(0) - the membrane proton channel. F(1) has five subunits: alpha(3), beta(3), gamma(1), delta(1), epsilon(1). F(0) has four main subunits: a(1), b(1), b'(1) and c(10-14). The alpha and beta chains form an alternating ring which encloses part of the gamma chain. F(1) is attached to F(0) by a central stalk formed by the gamma and epsilon chains, while a peripheral stalk is formed by the delta, b and b' chains.

It is found in the plastid. It localises to the chloroplast thylakoid membrane. In terms of biological role, f(1)F(0) ATP synthase produces ATP from ADP in the presence of a proton or sodium gradient. F-type ATPases consist of two structural domains, F(1) containing the extramembraneous catalytic core and F(0) containing the membrane proton channel, linked together by a central stalk and a peripheral stalk. During catalysis, ATP synthesis in the catalytic domain of F(1) is coupled via a rotary mechanism of the central stalk subunits to proton translocation. Its function is as follows. Component of the F(0) channel, it forms part of the peripheral stalk, linking F(1) to F(0). The polypeptide is ATP synthase subunit b, chloroplastic (Citrus sinensis (Sweet orange)).